Reading from the N-terminus, the 1287-residue chain is Cell adhesion molecule-related/down-regulated by oncogenes (1287 aa).

The signal sequence occupies residues 1 to 25; it reads MHPDLGPLCTLLYVTLTILCSSVSS. Residues 26-963 lie on the Extracellular side of the membrane; the sequence is DLAPYFTSEP…PATSPARSSD (938 aa). Ig-like C2-type domains follow at residues 29-114, 120-204, 225-303, 310-396, and 405-516; these read PYFT…ATVS, DFGS…LKVE, PTHS…KYVT, EHAS…GRLE, and PVII…ASLM. Cys-50 and Cys-97 form a disulfide bridge. Asn-88, Asn-100, Asn-180, Asn-287, Asn-294, Asn-342, and Asn-427 each carry an N-linked (GlcNAc...) asparagine glycan. Disulfide bonds link Cys-141–Cys-191 and Cys-243–Cys-290. 2 cysteine pairs are disulfide-bonded: Cys-333/Cys-380 and Cys-426/Cys-500. Positions 531 to 553 are disordered; that stretch reads LPDAAQNDDRSKRDGSETGLLSS. The span at 537-546 shows a compositional bias: basic and acidic residues; it reads NDDRSKRDGS. Asn-570 is a glycosylation site (N-linked (GlcNAc...) asparagine). 3 Fibronectin type-III domains span residues 579–677, 723–821, and 826–926; these read APII…SKEK, APDR…FPNR, and PITG…TKVK. The N-linked (GlcNAc...) asparagine glycan is linked to Asn-873. Residues 933–955 form a disordered region; sequence EYPVKDLSTPPNSLGSGGNVGPA. Residues 964–984 form a helical membrane-spanning segment; it reads MLYLIVGCVLGVMVLILMVFI. Over 985–1287 the chain is Cytoplasmic; sequence AMCLWKNRQQ…TEVLQQPRET (303 aa). Residues 1268–1287 form a disordered region; that stretch reads SPPGIPLDSPTEVLQQPRET.

As to quaternary structure, part of a complex that contains BOC, CDON, NEO1, cadherins and CTNNB1. Interacts with NTN3. Interacts with PTCH1. Interacts with GAS1. Interacts with DHH, IHH and SHH. N-glycosylated.

The protein resides in the cell membrane. Functionally, component of a cell-surface receptor complex that mediates cell-cell interactions between muscle precursor cells. Promotes differentiation of myogenic cells. The sequence is that of Cell adhesion molecule-related/down-regulated by oncogenes (CDON) from Homo sapiens (Human).